The chain runs to 419 residues: Aminoacyltransferase FemB (419 aa).

It belongs to the FemABX family. In terms of assembly, homodimer. Interacts with FemA.

It is found in the cytoplasm. It carries out the reaction MurNAc-L-Ala-D-isoglutaminyl-L-Lys-(N(6)-tri-Gly)-D-Ala-D-Ala-diphospho-di-trans,octa-cis-undecaprenyl-GlcNAc + 2 glycyl-tRNA(Gly) = MurNAc-L-Ala-D-isoglutaminyl-L-Lys-(N(6)-penta-Gly)-D-Ala-D-Ala-diphospho-di-trans,octa-cis-undecaprenyl-GlcNAc + 2 tRNA(Gly) + 2 H(+). Functionally, catalyzes the formation of the pentaglycine interpeptide bridge, which is characteristic of the S.aureus peptidoglycan. Adds glycines 4 and 5 of the pentaglycine bridge, using glycyl-tRNA(Gly) as donor. Involved in resistance to methicillin. In Staphylococcus aureus (strain NCTC 8325 / PS 47), this protein is Aminoacyltransferase FemB (femB).